Here is a 121-residue protein sequence, read N- to C-terminus: Small ribosomal subunit protein uS13 (121 aa).

The interval 89–121 (RRHRMSLPVRGQRTRTNARTRRGSRKTVAGRKK) is disordered. Basic residues predominate over residues 100 to 121 (QRTRTNARTRRGSRKTVAGRKK).

Belongs to the universal ribosomal protein uS13 family. In terms of assembly, part of the 30S ribosomal subunit. Forms a loose heterodimer with protein S19. Forms two bridges to the 50S subunit in the 70S ribosome.

In terms of biological role, located at the top of the head of the 30S subunit, it contacts several helices of the 16S rRNA. In the 70S ribosome it contacts the 23S rRNA (bridge B1a) and protein L5 of the 50S subunit (bridge B1b), connecting the 2 subunits; these bridges are implicated in subunit movement. Contacts the tRNAs in the A and P-sites. This is Small ribosomal subunit protein uS13 from Prochlorococcus marinus subsp. pastoris (strain CCMP1986 / NIES-2087 / MED4).